The following is a 912-amino-acid chain: Metabotropic glutamate receptor 4 (912 aa).

The N-terminal stretch at 1-32 (MPGKSGLGWWWARLPLCLLLSLYGPWMPSSLG) is a signal peptide. At 33–586 (KPKGHPHMNS…PIIKLEWDSP (554 aa)) the chain is on the extracellular side. The cysteines at positions 67 and 109 are disulfide-linked. N-linked (GlcNAc...) asparagine glycosylation is present at asparagine 98. Residues serine 159, 180-182 (AST), and tyrosine 230 each bind L-glutamate. Disulfide bonds link cysteine 249–cysteine 538, cysteine 372–cysteine 388, cysteine 428–cysteine 435, cysteine 520–cysteine 539, cysteine 524–cysteine 542, cysteine 545–cysteine 557, and cysteine 560–cysteine 573. N-linked (GlcNAc...) asparagine glycosylation occurs at asparagine 301. Aspartate 312 is a binding site for L-glutamate. Lysine 405 provides a ligand contact to L-glutamate. N-linked (GlcNAc...) asparagine glycans are attached at residues asparagine 454 and asparagine 484. The N-linked (GlcNAc...) asparagine glycan is linked to asparagine 569. A helical membrane pass occupies residues 587-607 (WAVLPLFLAVVGIAATLFVVI). Residues 608-624 (TFVRYNDTPIVKASGRE) lie on the Cytoplasmic side of the membrane. Residues 625-645 (LSYVLLAGIFLCYATTFLMIA) form a helical membrane-spanning segment. Topologically, residues 646–653 (EPDLGTCS) are extracellular. A helical membrane pass occupies residues 654–671 (LRRIFLGLGMSISYAALL). Topologically, residues 672–699 (TKTNRIYRIFEQGKRSVSAPRFISPASQ) are cytoplasmic. A helical membrane pass occupies residues 700–720 (LAITFSLISLQLLGICVWFVV). The Extracellular segment spans residues 721–751 (DPSHSVVDFQDQRTLDPRFARGVLKCDISDL). The helical transmembrane segment at 752–772 (SLICLLGYSMLLMVTCTVYAI) threads the bilayer. Residues 773 to 786 (KTRGVPETFNEAKP) are Cytoplasmic-facing. A helical transmembrane segment spans residues 787 to 807 (IGFTMYTTCIVWLAFIPIFFG). Topologically, residues 808–826 (TSQSADKLYIQTTTLTVSV) are extracellular. The helical transmembrane segment at 827–847 (SLSASVSLGMLYMPKVYIILF) threads the bilayer. The Cytoplasmic segment spans residues 848-912 (HPEQNVPKRK…TYVTYTNHAI (65 aa)).

This sequence belongs to the G-protein coupled receptor 3 family. As to quaternary structure, interacts with PICK1.

Its subcellular location is the cell membrane. Its function is as follows. G-protein coupled receptor for glutamate. Ligand binding causes a conformation change that triggers signaling via guanine nucleotide-binding proteins (G proteins) and modulates the activity of down-stream effectors. Signaling inhibits adenylate cyclase activity. This chain is Metabotropic glutamate receptor 4 (GRM4), found in Macaca fascicularis (Crab-eating macaque).